We begin with the raw amino-acid sequence, 1040 residues long: Multidrug resistance protein MdtB (1040 aa).

12 helical membrane passes run 25-45, 347-367, 369-389, 396-416, 440-460, 472-492, 537-557, 863-883, 888-908, 910-930, 968-988, and 998-1018; these read LLMAAILLAGIIGYRFLPVAA, LMLAIALVVMIIYLFLRNIPA, IIPGVAVPLSLIGTFAVMVFL, LTLMALTIATGFVVDDAIVVI, IGFTIISLTFSLIAVLIPLLF, FAVTLAVAILISAVVSLTLTP, WLTLSVAFATLLLSVMLWIVI, LGSTVWLIVAAVVAMYIVLGV, FIHPITILSTLPTAGVGALLA, IIAGSELDIIAIIGIILLIGI, ILMTTLAALLGALPLMLSTGV, and IAMVGGLLVSQVLTLFTTPVI.

Belongs to the resistance-nodulation-cell division (RND) (TC 2.A.6) family. MdtB subfamily. As to quaternary structure, part of a tripartite efflux system composed of MdtA, MdtB and MdtC. MdtB forms a heteromultimer with MdtC.

Its subcellular location is the cell inner membrane. The chain is Multidrug resistance protein MdtB from Salmonella schwarzengrund (strain CVM19633).